The following is a 257-amino-acid chain: Imidazole glycerol phosphate synthase subunit HisF (257 aa).

Catalysis depends on residues aspartate 12 and aspartate 131.

This sequence belongs to the HisA/HisF family. Heterodimer of HisH and HisF.

Its subcellular location is the cytoplasm. It catalyses the reaction 5-[(5-phospho-1-deoxy-D-ribulos-1-ylimino)methylamino]-1-(5-phospho-beta-D-ribosyl)imidazole-4-carboxamide + L-glutamine = D-erythro-1-(imidazol-4-yl)glycerol 3-phosphate + 5-amino-1-(5-phospho-beta-D-ribosyl)imidazole-4-carboxamide + L-glutamate + H(+). Its pathway is amino-acid biosynthesis; L-histidine biosynthesis; L-histidine from 5-phospho-alpha-D-ribose 1-diphosphate: step 5/9. In terms of biological role, IGPS catalyzes the conversion of PRFAR and glutamine to IGP, AICAR and glutamate. The HisF subunit catalyzes the cyclization activity that produces IGP and AICAR from PRFAR using the ammonia provided by the HisH subunit. The chain is Imidazole glycerol phosphate synthase subunit HisF from Burkholderia thailandensis (strain ATCC 700388 / DSM 13276 / CCUG 48851 / CIP 106301 / E264).